A 432-amino-acid polypeptide reads, in one-letter code: Golgin subfamily A member 6-like protein 9 (432 aa).

The span at 1–11 (MWPQPRLPPHP) shows a compositional bias: pro residues. 2 disordered regions span residues 1 to 77 (MWPQ…YGEG) and 349 to 411 (KELE…AGGA). Positions 51-62 (NGSSPDTFTSGG) are enriched in polar residues. Residues 157 to 354 (SKMEQLQDET…EQQVKELEKS (198 aa)) adopt a coiled-coil conformation. Over residues 349–362 (KELEKSGGAEEPRG) the composition is skewed to basic and acidic residues. Residues 366-381 (AAAARPVAGAPVPQGA) show a composition bias toward low complexity.

Belongs to the GOLGA6 family.

This chain is Golgin subfamily A member 6-like protein 9, found in Homo sapiens (Human).